Reading from the N-terminus, the 205-residue chain is Ribosomal RNA small subunit methyltransferase G 1 (205 aa).

S-adenosyl-L-methionine-binding positions include glycine 77, leucine 82, 100–102, 129–130, and arginine 138; these read EKS and LE.

The protein belongs to the methyltransferase superfamily. RNA methyltransferase RsmG family.

It is found in the cytoplasm. It carries out the reaction guanosine(527) in 16S rRNA + S-adenosyl-L-methionine = N(7)-methylguanosine(527) in 16S rRNA + S-adenosyl-L-homocysteine. Specifically methylates the N7 position of guanine in position 527 of 16S rRNA. In Bdellovibrio bacteriovorus (strain ATCC 15356 / DSM 50701 / NCIMB 9529 / HD100), this protein is Ribosomal RNA small subunit methyltransferase G 1.